We begin with the raw amino-acid sequence, 864 residues long: Protein 4.1 (864 aa).

Polar residues-rich tracts occupy residues 1-16 (MTTE…NSQH) and 27-41 (NSGQ…SCQT). Disordered stretches follow at residues 1 to 122 (MTTE…GTSL), 136 to 170 (EPEL…DFEI), and 182 to 202 (IEVK…ASQK). A Phosphoserine modification is found at Ser14. A Phosphothreonine; by CDK1 modification is found at Thr60. Residues 61 to 75 (PTHEDLTKNKERTSE) show a composition bias toward basic and acidic residues. Low complexity predominate over residues 76–87 (SRGLSRLFSSFL). Phosphoserine occurs at positions 84, 85, 95, 104, 121, 149, 151, 152, 188, and 191. Basic and acidic residues predominate over residues 101–117 (EVESDKEKGEGGQKEIE). Polar residues predominate over residues 149–158 (SLSSAETQPA). Residues 182–199 (IEVKEESPQSKAETELKA) show a composition bias toward basic and acidic residues. One can recognise an FERM domain in the interval 210-491 (MHCKVSLLDD…EHHTFFRLTS (282 aa)). Phosphotyrosine is present on Tyr222. Thr378 bears the Phosphothreonine mark. Positions 494 to 614 (TIPKSKFLAL…QAEPEPTEAW (121 aa)) are hydrophilic. Disordered stretches follow at residues 518-572 (RQAS…VAEG) and 586-611 (KAQK…PEPT). Ser521, Ser540, Ser542, and Ser555 each carry phosphoserine. Residues 587 to 600 (AQKETVKAEVKKED) are compositionally biased toward basic and acidic residues. Residues 601–610 (EPPEQAEPEP) show a composition bias toward acidic residues. The tract at residues 615-713 (KVEKTHIEVT…WDKRLSTHSP (99 aa)) is spectrin--actin-binding. Tyr660 is subject to Phosphotyrosine; by EGFR. Residues Ser664, Ser674, Ser684, and Ser709 each carry the phosphoserine modification. Phosphoserine; by CDK1 is present on Ser712. The tract at residues 714–864 (FRTLNINGQI…VHQETEIADE (151 aa)) is C-terminal (CTD). Residues Thr736 and Thr859 each carry the phosphothreonine modification.

As to quaternary structure, binds with a high affinity to glycophorin and with lower affinity to band III protein. Associates with the nuclear mitotic apparatus. Interacts with calmodulin. Interacts with CPAP. Interacts with DLG1. Also found to associate with contractile apparatus and tight junctions. Interacts with NUMA1; this interaction is negatively regulated by CDK1 during metaphase and promotes anaphase-specific localization of NUMA1 in symmetrically dividing cells. Interacts with ATP2B1; regulates small intestinal calcium absorption through regulation of membrane expression of ATP2B1. In terms of processing, phosphorylated at multiple sites by different protein kinases and each phosphorylation event selectively modulates the protein's functions. Phosphorylation on Tyr-660 reduces the ability of 4.1 to promote the assembly of the spectrin/actin/4.1 ternary complex. Post-translationally, O-glycosylated; contains N-acetylglucosamine side chains in the C-terminal domain.

Its subcellular location is the cytoplasm. The protein resides in the cytoskeleton. It is found in the cell cortex. The protein localises to the nucleus. In terms of biological role, protein 4.1 is a major structural element of the erythrocyte membrane skeleton. It plays a key role in regulating membrane physical properties of mechanical stability and deformability by stabilizing spectrin-actin interaction. Recruits DLG1 to membranes. Required for dynein-dynactin complex and NUMA1 recruitment at the mitotic cell cortex during anaphase. This is Protein 4.1 from Homo sapiens (Human).